Here is a 187-residue protein sequence, read N- to C-terminus: Crossover junction endodeoxyribonuclease RuvC (187 aa).

Active-site residues include aspartate 7, glutamate 67, and aspartate 140. Positions 7, 67, and 140 each coordinate Mg(2+).

The protein belongs to the RuvC family. Homodimer which binds Holliday junction (HJ) DNA. The HJ becomes 2-fold symmetrical on binding to RuvC with unstacked arms; it has a different conformation from HJ DNA in complex with RuvA. In the full resolvosome a probable DNA-RuvA(4)-RuvB(12)-RuvC(2) complex forms which resolves the HJ. Mg(2+) is required as a cofactor.

It localises to the cytoplasm. It catalyses the reaction Endonucleolytic cleavage at a junction such as a reciprocal single-stranded crossover between two homologous DNA duplexes (Holliday junction).. The RuvA-RuvB-RuvC complex processes Holliday junction (HJ) DNA during genetic recombination and DNA repair. Endonuclease that resolves HJ intermediates. Cleaves cruciform DNA by making single-stranded nicks across the HJ at symmetrical positions within the homologous arms, yielding a 5'-phosphate and a 3'-hydroxyl group; requires a central core of homology in the junction. The consensus cleavage sequence is 5'-(A/T)TT(C/G)-3'. Cleavage occurs on the 3'-side of the TT dinucleotide at the point of strand exchange. HJ branch migration catalyzed by RuvA-RuvB allows RuvC to scan DNA until it finds its consensus sequence, where it cleaves and resolves the cruciform DNA. In Chlorobium phaeobacteroides (strain DSM 266 / SMG 266 / 2430), this protein is Crossover junction endodeoxyribonuclease RuvC.